Consider the following 183-residue polypeptide: Ferritin heavy chain (183 aa).

The residue at position 1 (M1) is an N-acetylmethionine. T2 carries the N-acetylthreonine; in Ferritin heavy chain, N-terminally processed modification. Positions 11–160 (QNYHQDSEAA…DHVTNLRKMG (150 aa)) constitute a Ferritin-like diiron domain. 5 residues coordinate Fe cation: E28, E63, H66, E108, and Q142. A phosphoserine mark is found at S179 and S183.

This sequence belongs to the ferritin family. Oligomer of 24 subunits. There are two types of subunits: L (light) chain and H (heavy) chain. The major chain can be light or heavy, depending on the species and tissue type. In the human liver, the heavy chain is predominant. The functional molecule forms a roughly spherical shell with a diameter of 12 nm and contains a central cavity into which the insoluble mineral iron core is deposited. Interacts with NCOA4; NCOA4 promotes targeting of the iron-binding ferritin complex to autolysosomes following starvation or iron depletion. Expressed in the liver.

The protein resides in the cytoplasm. It is found in the lysosome. It localises to the cytoplasmic vesicle. Its subcellular location is the autophagosome. The enzyme catalyses 4 Fe(2+) + O2 + 4 H(+) = 4 Fe(3+) + 2 H2O. Functionally, stores iron in a soluble, non-toxic, readily available form. Important for iron homeostasis. Has ferroxidase activity. Iron is taken up in the ferrous form and deposited as ferric hydroxides after oxidation. Also plays a role in delivery of iron to cells. Mediates iron uptake in capsule cells of the developing kidney. Delivery to lysosomes is mediated by the cargo receptor NCOA4 for autophagic degradation and release of iron. In Homo sapiens (Human), this protein is Ferritin heavy chain (FTH1).